Reading from the N-terminus, the 332-residue chain is Geranylgeranyl diphosphate synthase (332 aa).

Isopentenyl diphosphate is bound by residues Lys45, Arg48, and His77. Residues Asp84 and Asp88 each coordinate Mg(2+). Arg93 lines the an all-trans-polyprenyl diphosphate pocket. Position 94 (Arg94) interacts with isopentenyl diphosphate. Positions 177, 178, 215, 232, and 242 each coordinate an all-trans-polyprenyl diphosphate.

This sequence belongs to the FPP/GGPP synthase family. It depends on Mg(2+) as a cofactor.

It carries out the reaction isopentenyl diphosphate + (2E,6E)-farnesyl diphosphate = (2E,6E,10E)-geranylgeranyl diphosphate + diphosphate. It participates in isoprenoid biosynthesis; geranylgeranyl diphosphate biosynthesis; geranylgeranyl diphosphate from farnesyl diphosphate and isopentenyl diphosphate: step 1/1. In terms of biological role, catalyzes the condensation of isopentenyl pyrophosphate with the allylic pyrophosphates to yield geranylgeranyl diphosphate (GGPP) which is a precursor of the ether-linked lipids. This is Geranylgeranyl diphosphate synthase (gds) from Saccharolobus solfataricus (strain ATCC 35092 / DSM 1617 / JCM 11322 / P2) (Sulfolobus solfataricus).